A 1033-amino-acid polypeptide reads, in one-letter code: Isoleucine--tRNA ligase 2 (1033 aa).

The 'HIGH' region signature appears at 47–57 (PTANGLPHVGH). The short motif at 590–594 (KMSKS) is the 'KMSKS' region element. Position 593 (Lys-593) interacts with ATP.

The protein belongs to the class-I aminoacyl-tRNA synthetase family. IleS type 2 subfamily. Monomer. Zn(2+) serves as cofactor.

The protein resides in the cytoplasm. The enzyme catalyses tRNA(Ile) + L-isoleucine + ATP = L-isoleucyl-tRNA(Ile) + AMP + diphosphate. Catalyzes the attachment of isoleucine to tRNA(Ile). As IleRS can inadvertently accommodate and process structurally similar amino acids such as valine, to avoid such errors it has two additional distinct tRNA(Ile)-dependent editing activities. One activity is designated as 'pretransfer' editing and involves the hydrolysis of activated Val-AMP. The other activity is designated 'posttransfer' editing and involves deacylation of mischarged Val-tRNA(Ile). The chain is Isoleucine--tRNA ligase 2 from Bacillus cereus (strain ATCC 14579 / DSM 31 / CCUG 7414 / JCM 2152 / NBRC 15305 / NCIMB 9373 / NCTC 2599 / NRRL B-3711).